The chain runs to 800 residues: DNA topoisomerase 4 subunit A (800 aa).

A Topo IIA-type catalytic domain is found at 31–495; it reads LPDVRDGLKP…EIEEIKIDKE (465 aa). Residue Y119 is the O-(5'-phospho-DNA)-tyrosine intermediate of the active site.

The protein belongs to the type II topoisomerase GyrA/ParC subunit family. ParC type 2 subfamily. In terms of assembly, heterotetramer composed of ParC and ParE.

It localises to the cell membrane. It carries out the reaction ATP-dependent breakage, passage and rejoining of double-stranded DNA.. Functionally, topoisomerase IV is essential for chromosome segregation. It relaxes supercoiled DNA. Performs the decatenation events required during the replication of a circular DNA molecule. This chain is DNA topoisomerase 4 subunit A, found in Staphylococcus aureus.